The following is a 139-amino-acid chain: Histone H2B (139 aa).

A compositionally biased stretch (basic and acidic residues) spans 1 to 10; the sequence is MAPKVAEKKP. Positions 1–47 are disordered; sequence MAPKVAEKKPSLAGKAPAGKAPAEKKEAGKKTTTATGEKKKRTKARK. Residues lysine 8 and lysine 9 each carry the N6-acetyllysine; alternate modification. Glycyl lysine isopeptide (Lys-Gly) (interchain with G-Cter in SUMO); alternate cross-links involve residues lysine 8 and lysine 9. Residue lysine 15 is modified to N6-acetyllysine. Lysine 25 is subject to N6-acetyllysine; alternate. Lysine 25 is covalently cross-linked (Glycyl lysine isopeptide (Lys-Gly) (interchain with G-Cter in SUMO); alternate). Residue lysine 26 forms a Glycyl lysine isopeptide (Lys-Gly) (interchain with G-Cter in SUMO) linkage. Lysine 133 participates in a covalent cross-link: Glycyl lysine isopeptide (Lys-Gly) (interchain with G-Cter in ubiquitin).

It belongs to the histone H2B family. As to quaternary structure, the nucleosome is a histone octamer containing two molecules each of H2A, H2B, H3 and H4 assembled in one H3-H4 heterotetramer and two H2A-H2B heterodimers. The octamer wraps approximately 147 bp of DNA. In terms of processing, monoubiquitinated by the UBC2-BRE1 complex to form H2BK123ub1. H2BK123ub1 gives a specific tag for epigenetic transcriptional activation and is also prerequisite for H3K4me and H3K79me formation. H2BK123ub1 also modulates the formation of double-strand breaks during meiosis and is a prerequisite for DNA-damage checkpoint activation. Post-translationally, acetylated by GCN5 to form H2BK11ac and H2BK16ac. H2BK16ac can also be formed by ESA1. Acetylation of N-terminal lysines and particularly formation of H2BK11acK16ac has a positive effect on transcription. Sumoylation to form H2BK6su or H2BK7su, and probably also H2BK16su or H2BK17su, occurs preferentially near the telomeres and represses gene transcription.

It localises to the nucleus. The protein localises to the chromosome. In terms of biological role, core component of nucleosome. Nucleosomes wrap and compact DNA into chromatin, limiting DNA accessibility to the cellular machineries which require DNA as a template. Histones thereby play a central role in transcription regulation, DNA repair, DNA replication and chromosomal stability. DNA accessibility is regulated via a complex set of post-translational modifications of histones, also called histone code, and nucleosome remodeling. This Yarrowia lipolytica (strain CLIB 122 / E 150) (Yeast) protein is Histone H2B (HTB1).